A 590-amino-acid chain; its full sequence is Glutamine--tRNA ligase (590 aa).

The 'HIGH' region signature appears at 55-65 (PEPNGYLHIGH). ATP is bound by residues 56 to 58 (EPN) and 62 to 68 (HIGHAKS). Aspartate 93 and tyrosine 238 together coordinate L-glutamine. ATP-binding positions include threonine 257 and 292 to 293 (RL). Positions 299 to 303 (ITSKR) match the 'KMSKS' region motif.

The protein belongs to the class-I aminoacyl-tRNA synthetase family. In terms of assembly, monomer.

Its subcellular location is the cytoplasm. The catalysed reaction is tRNA(Gln) + L-glutamine + ATP = L-glutaminyl-tRNA(Gln) + AMP + diphosphate. This chain is Glutamine--tRNA ligase, found in Polynucleobacter asymbioticus (strain DSM 18221 / CIP 109841 / QLW-P1DMWA-1) (Polynucleobacter necessarius subsp. asymbioticus).